The chain runs to 451 residues: Chromosomal replication initiator protein DnaA (451 aa).

The interval 1–73 (MNAHPKEIWE…IRSLQMVTSQ (73 aa)) is domain I, interacts with DnaA modulators. The tract at residues 73 to 112 (QKYNVKFLISSELPEEFLTLDTINEQNIKGSIIVSDEMSA) is domain II. The domain III, AAA+ region stretch occupies residues 113-329 (MLNPKYTFTS…GALIRIVAFS (217 aa)). Residues G157, G159, K160, and T161 each coordinate ATP. The segment at 330–451 (SLTNKEISVD…NDLTKRLDQQ (122 aa)) is domain IV, binds dsDNA.

Belongs to the DnaA family. Oligomerizes as a right-handed, spiral filament on DNA at oriC.

Its subcellular location is the cytoplasm. In terms of biological role, plays an essential role in the initiation and regulation of chromosomal replication. ATP-DnaA binds to the origin of replication (oriC) to initiate formation of the DNA replication initiation complex once per cell cycle. Binds the DnaA box (a 9 base pair repeat at the origin) and separates the double-stranded (ds)DNA. Forms a right-handed helical filament on oriC DNA; dsDNA binds to the exterior of the filament while single-stranded (ss)DNA is stabiized in the filament's interior. The ATP-DnaA-oriC complex binds and stabilizes one strand of the AT-rich DNA unwinding element (DUE), permitting loading of DNA polymerase. After initiation quickly degrades to an ADP-DnaA complex that is not apt for DNA replication. Binds acidic phospholipids. The sequence is that of Chromosomal replication initiator protein DnaA from Clostridium kluyveri (strain NBRC 12016).